The primary structure comprises 88 residues: Small ribosomal subunit protein uS15 (88 aa).

The protein belongs to the universal ribosomal protein uS15 family. As to quaternary structure, part of the 30S ribosomal subunit. Forms a bridge to the 50S subunit in the 70S ribosome, contacting the 23S rRNA.

Functionally, one of the primary rRNA binding proteins, it binds directly to 16S rRNA where it helps nucleate assembly of the platform of the 30S subunit by binding and bridging several RNA helices of the 16S rRNA. Its function is as follows. Forms an intersubunit bridge (bridge B4) with the 23S rRNA of the 50S subunit in the ribosome. This Trichlorobacter lovleyi (strain ATCC BAA-1151 / DSM 17278 / SZ) (Geobacter lovleyi) protein is Small ribosomal subunit protein uS15.